We begin with the raw amino-acid sequence, 65 residues long: MKRSSMDLVYKPISGTIGSVSGTIGSVSSVSGTIGSVSGTIGSVSGTIGSVSGTIGSVSGTIGSV.

TIGSVS motif repeat units lie at residues 16-21, 23-28, 33-38, 40-45, 47-52, and 54-59; these read TIGSVS. Residues I17, I24, I34, I41, I48, and I55 each carry the methylcyclopropylglycine modification.

In terms of processing, is subject to maturation by TigE, that catalyzes the formation of methylcyclopropylglycine (mCPG) residues from isoleucine residues residing in the repeating TIGSVS motifs.

Precursor peptide which undergoes post-translational modifications by tailoring enzymes, leading to the mature natural product. The protein is Precursor peptide TigB of Paramaledivibacter caminithermalis (strain DSM 15212 / CIP 107654 / DViRD3) (Clostridium caminithermale).